We begin with the raw amino-acid sequence, 383 residues long: ATP phosphoribosyltransferase regulatory subunit (383 aa).

This sequence belongs to the class-II aminoacyl-tRNA synthetase family. HisZ subfamily. As to quaternary structure, heteromultimer composed of HisG and HisZ subunits.

It is found in the cytoplasm. It functions in the pathway amino-acid biosynthesis; L-histidine biosynthesis; L-histidine from 5-phospho-alpha-D-ribose 1-diphosphate: step 1/9. Functionally, required for the first step of histidine biosynthesis. May allow the feedback regulation of ATP phosphoribosyltransferase activity by histidine. In Cupriavidus pinatubonensis (strain JMP 134 / LMG 1197) (Cupriavidus necator (strain JMP 134)), this protein is ATP phosphoribosyltransferase regulatory subunit.